The sequence spans 236 residues: 2,3,4,5-tetrahydropyridine-2,6-dicarboxylate N-acetyltransferase (236 aa).

This sequence belongs to the transferase hexapeptide repeat family. DapH subfamily.

The enzyme catalyses (S)-2,3,4,5-tetrahydrodipicolinate + acetyl-CoA + H2O = L-2-acetamido-6-oxoheptanedioate + CoA. The protein operates within amino-acid biosynthesis; L-lysine biosynthesis via DAP pathway; LL-2,6-diaminopimelate from (S)-tetrahydrodipicolinate (acetylase route): step 1/3. Catalyzes the transfer of an acetyl group from acetyl-CoA to tetrahydrodipicolinate. This chain is 2,3,4,5-tetrahydropyridine-2,6-dicarboxylate N-acetyltransferase, found in Geobacillus thermodenitrificans (strain NG80-2).